Here is a 232-residue protein sequence, read N- to C-terminus: Putative N-acetylmannosamine-6-phosphate 2-epimerase (232 aa).

This sequence belongs to the NanE family.

The catalysed reaction is an N-acyl-D-glucosamine 6-phosphate = an N-acyl-D-mannosamine 6-phosphate. It functions in the pathway amino-sugar metabolism; N-acetylneuraminate degradation; D-fructose 6-phosphate from N-acetylneuraminate: step 3/5. Functionally, converts N-acetylmannosamine-6-phosphate (ManNAc-6-P) to N-acetylglucosamine-6-phosphate (GlcNAc-6-P). This Synechococcus elongatus (strain ATCC 33912 / PCC 7942 / FACHB-805) (Anacystis nidulans R2) protein is Putative N-acetylmannosamine-6-phosphate 2-epimerase.